A 160-amino-acid chain; its full sequence is MRIWIDADACPKAAKELVCKFALKRKLEVWMVAGQPQVKPPFACVRLVVVESGMDAADDYLVEQAEPGDLAICSDVPLADRLIKKQVAALDPRGREFDARNMGDKLAMRNLMADLRDQGQMGGGQAPYGERDRQAFANALDRLLTRLQREADLRASQPHR.

It belongs to the UPF0178 family.

In Pseudomonas aeruginosa (strain ATCC 15692 / DSM 22644 / CIP 104116 / JCM 14847 / LMG 12228 / 1C / PRS 101 / PAO1), this protein is UPF0178 protein PA5247.